The following is a 156-amino-acid chain: Arginine repressor (156 aa).

The protein belongs to the ArgR family.

The protein localises to the cytoplasm. Its pathway is amino-acid biosynthesis; L-arginine biosynthesis [regulation]. Regulates arginine biosynthesis genes. This Aeromonas hydrophila subsp. hydrophila (strain ATCC 7966 / DSM 30187 / BCRC 13018 / CCUG 14551 / JCM 1027 / KCTC 2358 / NCIMB 9240 / NCTC 8049) protein is Arginine repressor.